We begin with the raw amino-acid sequence, 271 residues long: Transmembrane protein 150A (271 aa).

The Cytoplasmic segment spans residues 1–2 (MT). Residues 3–23 (AWILLPVSLSAFSITGIWTVY) traverse the membrane as a helical segment. Over 24–75 (AMAVMNHHVCPVENWSYNESCPPDPAEQGGPKTCCTLDDVPLISKCGSYPPE) the chain is Extracellular. 2 N-linked (GlcNAc...) asparagine glycosylation sites follow: Asn-37 and Asn-41. A helical transmembrane segment spans residues 76–96 (SCLFSLIGNMGAFMVALICLL). Topologically, residues 97-108 (RYGQLLEQSRHS) are cytoplasmic. Residues 109–129 (WVNTTALITGCTNAAGLLVVG) traverse the membrane as a helical segment. Over 130–140 (NFQVDHARSLH) the chain is Extracellular. A helical transmembrane segment spans residues 141 to 161 (YVGAGVAFPAGLLFVCLHCAL). At 162–178 (SYQGATAPLDLAVAYLR) the chain is on the cytoplasmic side. A helical transmembrane segment spans residues 179–199 (SVLAVIAFITLVLSGVFFVHE). Residues 200–211 (SSQLQHGAALCE) are Extracellular-facing. The chain crosses the membrane as a helical span at residues 212-232 (WVCVIDILIFYGTFSYEFGAV). The Cytoplasmic segment spans residues 233 to 271 (SSDTLVAALQPTPGRACKSSGSSSTSTHLNCAPESIAMI).

This sequence belongs to the DRAM/TMEM150 family. As to quaternary structure, interacts (via C-terminal cytoplasmic tail) with PI4KA.

The protein localises to the cell membrane. Functionally, regulates localization of phosphatidylinositol 4-kinase (PI4K) to the plasma membrane, possibly by reducing the association of TTC7 (TTC7A or TTC7B) with the PI4K complex. Acts as a regulator of phosphatidylinositol 4-phosphate (PtdIns(4)P) synthesis. May also play a role in fasting-induced catabolism. The polypeptide is Transmembrane protein 150A (TMEM150A) (Homo sapiens (Human)).